We begin with the raw amino-acid sequence, 407 residues long: MAKEKFERNKPHVNVGTIGHVDHGKTTLTAALTRVCSEVWGGAAVAFDGIDNAPEERERGITIATSHVEYDSPIRHYAHVDCPGHADYVKNMITGAAQMDGAILVCGSTDGPMPQTREHILLSRQVGVPYIVVFLNKADLLAEDCGGVDSEEYAEMMELVEMELRELLDTYEFPGDDTPIIAGSALMALNGEDENELGTTAVKKLVEALDSYIPEPERAIDQPFLMPVEDVFSISGRGTVVTGRVERGIVKVGEELEIVGIRDTTKTTCTGVEMFRKLLDEGRAGENVGVLLRGTKRDDVERGQVLSKPGSVTPHTTFQSEIYVLSKDEGGRHTPFFKGYRPQFYFRTTDVTGACELPEGVEMVMPGDNVQMTVTLIAPIAMEEGLRFAIREGGRTVGAGVVAKIIA.

Residues 10-217 enclose the tr-type G domain; that stretch reads KPHVNVGTIG…ALDSYIPEPE (208 aa). The tract at residues 19–26 is G1; that stretch reads GHVDHGKT. 19-26 provides a ligand contact to GTP; that stretch reads GHVDHGKT. Threonine 26 lines the Mg(2+) pocket. Residues 60-64 form a G2 region; sequence GITIA. The interval 81–84 is G3; it reads DCPG. Residues 81-85 and 136-139 each bind GTP; these read DCPGH and NKAD. Residues 136–139 form a G4 region; sequence NKAD. Positions 184–186 are G5; the sequence is SAL.

The protein belongs to the TRAFAC class translation factor GTPase superfamily. Classic translation factor GTPase family. EF-Tu/EF-1A subfamily. In terms of assembly, monomer.

The protein localises to the cytoplasm. It catalyses the reaction GTP + H2O = GDP + phosphate + H(+). Its function is as follows. GTP hydrolase that promotes the GTP-dependent binding of aminoacyl-tRNA to the A-site of ribosomes during protein biosynthesis. This Saccharophagus degradans (strain 2-40 / ATCC 43961 / DSM 17024) protein is Elongation factor Tu.